The following is a 369-amino-acid chain: tRNA-specific 2-thiouridylase MnmA (369 aa).

Residues 12–19 (GMSGGVDS) and Met38 each bind ATP. The segment at 98–100 (NPD) is interaction with target base in tRNA. Catalysis depends on Cys103, which acts as the Nucleophile. Cysteines 103 and 200 form a disulfide. ATP is bound at residue Gly128. An interaction with tRNA region spans residues 150–152 (KDQ). Cys200 functions as the Cysteine persulfide intermediate in the catalytic mechanism. Residues 312–313 (RY) form an interaction with tRNA region.

Belongs to the MnmA/TRMU family. Interacts with TusE.

It is found in the cytoplasm. The enzyme catalyses S-sulfanyl-L-cysteinyl-[protein] + uridine(34) in tRNA + AH2 + ATP = 2-thiouridine(34) in tRNA + L-cysteinyl-[protein] + A + AMP + diphosphate + H(+). Catalyzes the 2-thiolation of uridine at the wobble position (U34) of tRNA(Lys), tRNA(Glu) and tRNA(Gln), leading to the formation of s(2)U34, the first step of tRNA-mnm(5)s(2)U34 synthesis. Sulfur is provided by IscS, via a sulfur-relay system. Binds ATP and its substrate tRNAs. This Sodalis glossinidius (strain morsitans) protein is tRNA-specific 2-thiouridylase MnmA.